The sequence spans 586 residues: MKKSYSGGTRTSSGRLRRLGDSSGPALKRSFEVEEVETPNSTPPRRVQTPLLRATVASSTQKFQDLGVKNSEPSARHVDSLSQRSPKASLRRVELSGPKAAEPVSRRTELSIDISSKQVENAGAIGPSRFGLKRAEVLGHKTPEPAPRRTEITIVKPQESAHRRMEPPASKVPEVPTAPATDAAPKRVEIQMPKPAEAPTAPSPAQTLENSEPAPVSQLQSRLEPKPQPPVAEATPRSQEATEAAPSCVGDMADTPRDAGLKQAPASRNEKAPVDFGYVGIDSILEQMRRKAMKQGFEFNIMVVGQSGLGKSTLINTLFKSKISRKSVQPTSEERIPKTIEIKSITHDIEEKGVRMKLTVIDTPGFGDHINNENCWQPIMKFINDQYEKYLQEEVNINRKKRIPDTRVHCCLYFIPATGHSLRPLDIEFMKRLSKVVNIVPVIAKADTLTLEERVHFKQRITADLLSNGIDVYPQKEFDEDSEDRLVNEKFREMIPFAVVGSDHEYQVNGKRILGRKTKWGTIEVENTTHCEFAYLRDLLIRTHMQNIKDITSSIHFEAYRVKRLNEGSSAMANGMEEKEPEAPEM.

M1 carries the post-translational modification N-acetylmethionine. Residues 1–14 show a composition bias toward low complexity; that stretch reads MKKSYSGGTRTSSG. Disordered stretches follow at residues 1–49, 62–108, and 134–268; these read MKKS…RVQT, KFQD…SRRT, and RAEV…PASR. 2 positions are modified to phosphoserine: S22 and S30. A phosphothreonine mark is found at T38, T42, and T49. K62 bears the N6-acetyllysine mark. Phosphoserine is present on residues S82, S85, S89, and S96. Residues 134–151 are compositionally biased toward basic and acidic residues; sequence RAEVLGHKTPEPAPRRTE. T142 is modified (phosphothreonine). At Y278 the chain carries Phosphotyrosine. Positions 295-567 constitute a Septin-type G domain; that stretch reads QGFEFNIMVV…EAYRVKRLNE (273 aa). A G1 motif region spans residues 305–312; sequence GQSGLGKS. 305 to 312 contributes to the GTP binding site; the sequence is GQSGLGKS. Phosphoserine occurs at positions 327 and 332. Residues T339, G365, 445–453, G501, and R516 each bind GTP; that span reads KADTLTLEE. Residues 362 to 365 form a G3 motif region; the sequence is DTPG. A G4 motif region spans residues 444 to 447; sequence AKAD.

Belongs to the TRAFAC class TrmE-Era-EngA-EngB-Septin-like GTPase superfamily. Septin GTPase family. In terms of assembly, septins polymerize into heterooligomeric protein complexes that form filaments, and associate with cellular membranes, actin filaments, and microtubules. GTPase activity is required for filament formation. Interacts with SEPTIN2, SEPTIN6, SEPTIN7, SEPTIN11 and SEPTIN14. Interacts with RTKN and ARHGEF18. In a mesenchymal cell line, Rho/RTKN signals cause disruption of wild-type septin filaments, but not of those containing isoform 2 variants HNA Trp-106 and Phe-111. In a mesenchymal cell line, isoform 2 variants HNA Trp-106 and Phe-111, but not wild type, form filaments with SEPTIN4. As to expression, widely expressed. Isoforms are differentially expressed in testes, kidney, liver heart, spleen, brain, peripheral blood leukocytes, skeletal muscle and kidney. Specific isoforms appear to demonstrate tissue specificity. Isoform 5 is the most highly expressed in fetal tissue. Isoform 1 is detected in all tissues except the brain and thymus, while isoform 2, isoform 3, and isoform 4 are detected at low levels in approximately half of the fetal tissues.

The protein resides in the cytoplasm. It localises to the cytoskeleton. In terms of biological role, filament-forming cytoskeletal GTPase. May play a role in cytokinesis (Potential). May play a role in the internalization of 2 intracellular microbial pathogens, Listeria monocytogenes and Shigella flexneri. The chain is Septin-9 from Homo sapiens (Human).